The primary structure comprises 277 residues: 2,3,4,5-tetrahydropyridine-2,6-dicarboxylate N-succinyltransferase (277 aa).

Substrate is bound by residues R106 and D143.

This sequence belongs to the transferase hexapeptide repeat family. Homotrimer.

The protein resides in the cytoplasm. It catalyses the reaction (S)-2,3,4,5-tetrahydrodipicolinate + succinyl-CoA + H2O = (S)-2-succinylamino-6-oxoheptanedioate + CoA. It participates in amino-acid biosynthesis; L-lysine biosynthesis via DAP pathway; LL-2,6-diaminopimelate from (S)-tetrahydrodipicolinate (succinylase route): step 1/3. The polypeptide is 2,3,4,5-tetrahydropyridine-2,6-dicarboxylate N-succinyltransferase (Xylella fastidiosa (strain Temecula1 / ATCC 700964)).